A 368-amino-acid polypeptide reads, in one-letter code: Glutamate 5-kinase (368 aa).

ATP is bound at residue Lys13. Substrate contacts are provided by Ser54, Asp141, and Asn153. 173 to 174 (SD) contributes to the ATP binding site. In terms of domain architecture, PUA spans 278–355 (RGEITVDAGA…AEIEAVLGYP (78 aa)).

This sequence belongs to the glutamate 5-kinase family.

The protein localises to the cytoplasm. It catalyses the reaction L-glutamate + ATP = L-glutamyl 5-phosphate + ADP. Its pathway is amino-acid biosynthesis; L-proline biosynthesis; L-glutamate 5-semialdehyde from L-glutamate: step 1/2. In terms of biological role, catalyzes the transfer of a phosphate group to glutamate to form L-glutamate 5-phosphate. This is Glutamate 5-kinase from Dinoroseobacter shibae (strain DSM 16493 / NCIMB 14021 / DFL 12).